Consider the following 418-residue polypeptide: L-rhamnose isomerase (418 aa).

Mn(2+) is bound by residues His-262, Asp-294, and Asp-296.

Belongs to the rhamnose isomerase family. Mn(2+) serves as cofactor.

The protein localises to the cytoplasm. The catalysed reaction is L-rhamnopyranose = L-rhamnulose. It functions in the pathway carbohydrate degradation; L-rhamnose degradation; glycerone phosphate from L-rhamnose: step 1/3. Functionally, catalyzes the interconversion of L-rhamnose and L-rhamnulose. This is L-rhamnose isomerase from Bacteroides thetaiotaomicron (strain ATCC 29148 / DSM 2079 / JCM 5827 / CCUG 10774 / NCTC 10582 / VPI-5482 / E50).